Here is a 1530-residue protein sequence, read N- to C-terminus: Neurexin-1 (1530 aa).

Residues 1-30 (MGTALVQHGGCCLLCLSLLLLGCWAELGSG) form the signal peptide. Residues 31-217 (LEFPGAEGQW…PPNSGGGSPC (187 aa)) enclose the Laminin G-like 1 domain. The Extracellular segment spans residues 31-1454 (LEFPGAEGQW…EVIRESSSTT (1424 aa)). Asn-125 and Asn-190 each carry an N-linked (GlcNAc...) asparagine glycan. A disordered region spans residues 196–219 (PVDGSEVKLDEEPPNSGGGSPCEA). One can recognise an EGF-like 1 domain in the interval 213-255 (GGSPCEAGDEGDGGVCLNGGVCSVVDDQAVCDCSRTGFRGKDC). 2 disulfide bridges follow: Cys-228–Cys-243 and Cys-245–Cys-255. Laminin G-like domains are found at residues 299 to 496 (IATF…AFKC) and 503 to 695 (DPIT…KPSC). Positions 345, 362, and 430 each coordinate Ca(2+). 5 cysteine pairs are disulfide-bonded: Cys-460/Cys-496, Cys-666/Cys-695, Cys-703/Cys-714, Cys-708/Cys-723, and Cys-725/Cys-735. Positions 699–736 (TAKPCLSNPCKNNGMCRDGWNRYVCDCSGTGYLGRSCE) constitute an EGF-like 2 domain. Laminin G-like domains follow at residues 741-914 (VLSY…IDYC) and 928-1103 (DPVT…ERGC). Residues Asp-788 and Leu-805 each contribute to the Ca(2+) site. An N-linked (GlcNAc...) asparagine glycan is attached at Asn-813. Arg-864 contacts Ca(2+). 5 cysteine pairs are disulfide-bonded: Cys-906–Cys-914, Cys-1075–Cys-1103, Cys-1110–Cys-1121, Cys-1115–Cys-1130, and Cys-1132–Cys-1142. The EGF-like 3 domain occupies 1106–1143 (PSTTCQEDSCSNQGVCLQQWDGFSCDCSMTSFSGPLCN). Positions 1149-1347 (YIFSKGGGQI…DANIAIVGNV (199 aa)) constitute a Laminin G-like 6 domain. Residues Asp-1199 and Val-1216 each coordinate Ca(2+). Asn-1246 is a glycosylation site (N-linked (GlcNAc...) asparagine). Ca(2+) is bound by residues Ile-1298 and Asn-1300. The O-linked (Xyl...) (heparan sulfate) serine glycan is linked to Ser-1408. The segment at 1412 to 1443 (PSDDEDIDPCEPSSGGLANPTRVGGREPYPGS) is disordered. Residues 1455–1475 (GMVVGIVAAAALCILILLYAM) traverse the membrane as a helical segment. The Cytoplasmic segment spans residues 1476-1530 (YKYRNRDEGSYHVDESRNYISNSAQSNGAVVKEKQPSSAKSANKNKKNKDKEYYV). Residues 1497-1523 (NSAQSNGAVVKEKQPSSAKSANKNKKN) are interaction with CASK. Positions 1497–1530 (NSAQSNGAVVKEKQPSSAKSANKNKKNKDKEYYV) are disordered.

Belongs to the neurexin family. Interacts (via laminin G-like domain 2 and/or laminin G-like domain 6) with NLGN1 forming a heterotetramer, where one NLGN1 dimer interacts with one NRXN1 dimer. Also interacts (via laminin G-like domain 2 and/or laminin G-like domain 6) with NLGN2, NLGN3 and NLGN4L; interactions with NLGN1, NLGN2, NLGN3 and NLGN4L are calcium-dependent. Interacts (via cytoplasmic C-terminal region) with CASK (via the PDZ, SH3 and guanylate kinase-like domains). Interacts (via cytoplasmic C-terminus) with CASKIN1 and APBA1. Interacts (via laminin G-like domain 2) with NXPH1 and NXPH3. Alpha-type isoforms (neurexin-1-alpha) interact (via laminin G-like domain 2 and/or laminin G-like domain 6) with DAG1 (via alpha-dystroglycan chain). Interacts with LRRTM1, LRRTM2, LRRTM3 and LRRTM4. Interacts with SYT13 and SYTL1. Interacts with CBLN1, CBLN2 and, less avidly, with CBLN4. Interacts with CLSTN3. Alpha-type isoforms interact with alpha-latrotoxin from spider venom. Post-translationally, O-glycosylated; contains heparan sulfate. Heparan sulfate attachment is required for synapse development by mediating interactions with neuroligins and LRRTM2. Brain (neuronal synapse).

The protein localises to the presynaptic cell membrane. In terms of biological role, cell surface protein involved in cell-cell-interactions, exocytosis of secretory granules and regulation of signal transmission. Function is isoform-specific. Alpha-type isoforms have a long N-terminus with six laminin G-like domains and play an important role in synaptic signal transmission. Alpha-type isoforms play a role in the regulation of calcium channel activity and Ca(2+)-triggered neurotransmitter release at synapses and at neuromuscular junctions. They play an important role in Ca(2+)-triggered exocytosis of secretory granules in pituitary gland. They may affect their functions at synapses and in endocrine cells via their interactions with proteins from the exocytotic machinery. Likewise, alpha-type isoforms play a role in regulating the activity of postsynaptic NMDA receptors, a subtype of glutamate-gated ion channels. Both alpha-type and beta-type isoforms may play a role in the formation or maintenance of synaptic junctions via their interactions (via the extracellular domains) with neuroligin family members, CBLN1 or CBLN2. In vitro, triggers the de novo formation of presynaptic structures. May be involved in specification of excitatory synapses. Alpha-type isoforms were first identified as receptors for alpha-latrotoxin from spider venom. The protein is Neurexin-1 (Nrxn1) of Rattus norvegicus (Rat).